The following is a 144-amino-acid chain: Phospholipase A2, membrane associated (144 aa).

A signal peptide spans M1–G20. 7 disulfides stabilise this stretch: C46–C137, C48–C64, C63–C117, C69–C144, C70–C110, C79–C103, and C97–C108. Residues Y47, G49, and S51 each contribute to the Ca(2+) site. H67 is an active-site residue. D68 contributes to the Ca(2+) binding site. D111 is an active-site residue.

It belongs to the phospholipase A2 family. Ca(2+) serves as cofactor.

It is found in the secreted. The protein resides in the cell membrane. Its subcellular location is the mitochondrion outer membrane. The catalysed reaction is a 1,2-diacyl-sn-glycero-3-phosphoethanolamine + H2O = a 1-acyl-sn-glycero-3-phosphoethanolamine + a fatty acid + H(+). It catalyses the reaction 1-hexadecanoyl-2-(9Z-octadecenoyl)-sn-glycero-3-phosphoethanolamine + H2O = 1-hexadecanoyl-sn-glycero-3-phosphoethanolamine + (9Z)-octadecenoate + H(+). It carries out the reaction 1-hexadecanoyl-2-(9Z,12Z-octadecadienoyl)-sn-glycero-3-phosphoethanolamine + H2O = 1-hexadecanoyl-sn-glycero-3-phosphoethanolamine + (9Z,12Z)-octadecadienoate + H(+). The enzyme catalyses 1-hexadecanoyl-2-(5Z,8Z,11Z,14Z-eicosatetraenoyl)-sn-glycero-3-phosphoethanolamine + H2O = 1-hexadecanoyl-sn-glycero-3-phosphoethanolamine + (5Z,8Z,11Z,14Z)-eicosatetraenoate + H(+). The catalysed reaction is N-hexadecanoyl-1,2-di-(9Z-octadecenoyl)-sn-glycero-3-phosphoethanolamine + H2O = N-hexadecanoyl-1-(9Z-octadecenoyl)-sn-glycero-3-phosphoethanolamine + (9Z)-octadecenoate + H(+). It catalyses the reaction 1,2-dihexadecanoyl-sn-glycero-3-phospho-(1'-sn-glycerol) + H2O = 1-hexadecanoyl-sn-glycero-3-phospho-(1'-sn-glycerol) + hexadecanoate + H(+). It carries out the reaction 1-hexadecanoyl-2-(9Z-octadecenoyl)-sn-glycero-3-phosphoglycerol + H2O = 1-hexadecanoyl-sn-glycero-3-phosphoglycerol + (9Z)-octadecenoate + H(+). The enzyme catalyses 1-hexadecanoyl-2-(9Z-octadecenoyl)-sn-glycero-3-phospho-(1'-sn-glycerol) + H2O = 1-hexadecanoyl-sn-glycero-3-phospho-(1'-sn-glycerol) + (9Z)-octadecenoate + H(+). The catalysed reaction is a 1,2-diacyl-sn-glycero-3-phosphocholine + H2O = a 1-acyl-sn-glycero-3-phosphocholine + a fatty acid + H(+). It catalyses the reaction 1,2-dihexadecanoyl-sn-glycero-3-phosphocholine + H2O = 1-hexadecanoyl-sn-glycero-3-phosphocholine + hexadecanoate + H(+). It carries out the reaction 1-hexadecanoyl-2-(9Z-octadecenoyl)-sn-glycero-3-phosphocholine + H2O = 1-hexadecanoyl-sn-glycero-3-phosphocholine + (9Z)-octadecenoate + H(+). The enzyme catalyses 1-hexadecanoyl-2-(9Z,12Z-octadecadienoyl)-sn-glycero-3-phosphocholine + H2O = (9Z,12Z)-octadecadienoate + 1-hexadecanoyl-sn-glycero-3-phosphocholine + H(+). The catalysed reaction is 1-hexadecanoyl-2-(4Z,7Z,10Z,13Z,16Z,19Z-docosahexaenoyl)-sn-glycero-3-phosphocholine + H2O = (4Z,7Z,10Z,13Z,16Z,19Z)-docosahexaenoate + 1-hexadecanoyl-sn-glycero-3-phosphocholine + H(+). Its function is as follows. Secretory calcium-dependent phospholipase A2 that primarily targets extracellular phospholipids with implications in host antimicrobial defense, inflammatory response and tissue regeneration. Hydrolyzes the ester bond of the fatty acyl group attached at sn-2 position of phospholipids (phospholipase A2 activity) with preference for phosphatidylethanolamines and phosphatidylglycerols over phosphatidylcholines. Contributes to lipid remodeling of cellular membranes and generation of lipid mediators involved in pathogen clearance. Displays bactericidal activity against Gram-positive bacteria by directly hydrolyzing phospholipids of the bacterial membrane. Upon sterile inflammation, targets membrane phospholipids of extracellular mitochondria released from activated platelets, generating free unsaturated fatty acids such as arachidonate that is used by neighboring leukocytes to synthesize inflammatory eicosanoids such as leukotrienes. Simultaneously, by compromising mitochondrial membrane integrity, promotes the release in circulation of potent damage-associated molecular pattern molecules that activate the innate immune response. Plays a stem cell regulator role in the intestinal crypt. Within intracellular compartment mediates Paneth cell differentiation and its stem cell supporting functions by inhibiting Wnt signaling pathway in intestinal stem cell (ICS). Secreted in the intestinal lumen upon inflammation, acts in an autocrine way and promotes prostaglandin E2 synthesis that stimulates Wnt signaling pathway in ICS cells and tissue regeneration. May play a role in the biosynthesis of N-acyl ethanolamines that regulate energy metabolism and inflammation. Hydrolyzes N-acyl phosphatidylethanolamines to N-acyl lysophosphatidylethanolamines, which are further cleaved by a lysophospholipase D to release N-acyl ethanolamines. Independent of its catalytic activity, acts as a ligand for integrins. Binds to and activates integrins ITGAV:ITGB3, ITGA4:ITGB1 and ITGA5:ITGB1. Binds to a site (site 2) which is distinct from the classical ligand-binding site (site 1) and induces integrin conformational changes and enhanced ligand binding to site 1. Induces cell proliferation in an integrin-dependent manner. This Bos taurus (Bovine) protein is Phospholipase A2, membrane associated (PLA2G2A).